The primary structure comprises 105 residues: Type VII secretion system extracellular protein D (105 aa).

As to quaternary structure, forms heterodimers with EsxB.

It localises to the secreted. This Staphylococcus aureus (strain USA300) protein is Type VII secretion system extracellular protein D.